Reading from the N-terminus, the 323-residue chain is Cytochrome c biogenesis protein CcsA (323 aa).

A run of 8 helical transmembrane segments spans residues 17 to 37 (VVSI…IVGF), 44 to 64 (GMII…FFSG), 68 to 88 (FSDL…FYMV), 98 to 118 (LSTI…SGLL), 143 to 163 (MILG…ILVI), 229 to 249 (IISL…VWAN), 262 to 279 (ETWA…LHSR), and 291 to 311 (IVAS…NLLG).

This sequence belongs to the CcmF/CycK/Ccl1/NrfE/CcsA family. As to quaternary structure, may interact with Ccs1.

It localises to the plastid. It is found in the chloroplast thylakoid membrane. Functionally, required during biogenesis of c-type cytochromes (cytochrome c6 and cytochrome f) at the step of heme attachment. The sequence is that of Cytochrome c biogenesis protein CcsA from Lotus japonicus (Lotus corniculatus var. japonicus).